A 146-amino-acid chain; its full sequence is uncharacterized protein (146 aa).

It belongs to the BlaI transcriptional regulatory family.

This is an uncharacterized protein from Latilactobacillus sakei (Lactobacillus sakei).